Reading from the N-terminus, the 88-residue chain is Outer membrane protein H.8 (88 aa).

The N-terminal stretch at 1-17 (MKKSLFAAALLSLALAA) is a signal peptide. Cys-18 carries N-palmitoyl cysteine lipidation. A lipid anchor (S-diacylglycerol cysteine) is attached at Cys-18. 13 tandem repeats follow at residues 23–27 (AAEAP), 28–32 (AAEAS), 33–37 (STEAP), 38–42 (AAEAP), 43–47 (AAEAP), 48–52 (AAEAA), 53–57 (AAEAP), 58–62 (AAEAP), 63–67 (AAEAP), 68–72 (AAEAA), 73–77 (ATEAP), 78–82 (AAEAP), and 83–87 (AAEAA). The 13 X 5 AA tandem repeats of [AS]-[AT]-E-A-[PAS] stretch occupies residues 23–87 (AAEAPAAEAS…AAEAPAAEAA (65 aa)). A disordered region spans residues 23 to 88 (AAEAPAAEAS…AEAPAAEAAK (66 aa)). Low complexity predominate over residues 25-88 (EAPAAEASST…AEAPAAEAAK (64 aa)).

It is found in the cell outer membrane. This chain is Outer membrane protein H.8, found in Neisseria gonorrhoeae (strain ATCC 700825 / FA 1090).